The following is a 103-amino-acid chain: Co-chaperonin GroES (103 aa).

The protein belongs to the GroES chaperonin family. In terms of assembly, heptamer of 7 subunits arranged in a ring. Interacts with the chaperonin GroEL.

Its subcellular location is the cytoplasm. In terms of biological role, together with the chaperonin GroEL, plays an essential role in assisting protein folding. The GroEL-GroES system forms a nano-cage that allows encapsulation of the non-native substrate proteins and provides a physical environment optimized to promote and accelerate protein folding. GroES binds to the apical surface of the GroEL ring, thereby capping the opening of the GroEL channel. This is Co-chaperonin GroES from Prochlorococcus marinus (strain SARG / CCMP1375 / SS120).